Reading from the N-terminus, the 498-residue chain is Probable global transactivator (498 aa).

The Helicase ATP-binding domain maps to 43-206 (RERRGRPHGG…YAIIHFLRCR (164 aa)). 55 to 63 (ADDMGLGKT) contacts ATP. Positions 157–160 (DEAH) match the DEAH box motif. The 157-residue stretch at 337–493 (ELVQRVLDTP…RTALNYEDIK (157 aa)) folds into the Helicase C-terminal domain.

This sequence belongs to the SNF2/RAD54 helicase family.

This is Probable global transactivator (GTA) from Orgyia pseudotsugata (Douglas-fir tussock moth).